Here is a 77-residue protein sequence, read N- to C-terminus: MMFTPLIVLTLLVLATAEHQCGPNEQWSGCPKCELQSGESDKPCATICGEPKCYCSPDKYRRIPDGRCIRKIQCPQH.

Residues 1–17 (MMFTPLIVLTLLVLATA) form the signal peptide. 4 disulfide bridges follow: cysteine 21/cysteine 53, cysteine 30/cysteine 48, cysteine 33/cysteine 44, and cysteine 55/cysteine 68. A TIL domain is found at 21 to 74 (CGPNEQWSGCPKCELQSGESDKPCATICGEPKCYCSPDKYRRIPDGRCIRKIQC).

It localises to the secreted. Defends the organism against the host's proteinases. The chain is Serine protease inhibitor 3 from Anisakis simplex (Herring worm).